Consider the following 176-residue polypeptide: Large ribosomal subunit protein uL10 (176 aa).

Belongs to the universal ribosomal protein uL10 family. Part of the ribosomal stalk of the 50S ribosomal subunit. The N-terminus interacts with L11 and the large rRNA to form the base of the stalk. The C-terminus forms an elongated spine to which L12 dimers bind in a sequential fashion forming a multimeric L10(L12)X complex.

Its function is as follows. Forms part of the ribosomal stalk, playing a central role in the interaction of the ribosome with GTP-bound translation factors. The chain is Large ribosomal subunit protein uL10 from Carboxydothermus hydrogenoformans (strain ATCC BAA-161 / DSM 6008 / Z-2901).